A 196-amino-acid polypeptide reads, in one-letter code: Pyridoxal 5'-phosphate synthase subunit PdxT (196 aa).

An L-glutamine-binding site is contributed by 47 to 49; sequence GES. The Nucleophile role is filled by C79. L-glutamine is bound by residues R106 and 134-135; that span reads IR. Residues H170 and E172 each act as charge relay system in the active site.

Belongs to the glutaminase PdxT/SNO family. As to quaternary structure, in the presence of PdxS, forms a dodecamer of heterodimers. Only shows activity in the heterodimer.

The enzyme catalyses aldehydo-D-ribose 5-phosphate + D-glyceraldehyde 3-phosphate + L-glutamine = pyridoxal 5'-phosphate + L-glutamate + phosphate + 3 H2O + H(+). The catalysed reaction is L-glutamine + H2O = L-glutamate + NH4(+). Its pathway is cofactor biosynthesis; pyridoxal 5'-phosphate biosynthesis. Its function is as follows. Catalyzes the hydrolysis of glutamine to glutamate and ammonia as part of the biosynthesis of pyridoxal 5'-phosphate. The resulting ammonia molecule is channeled to the active site of PdxS. The chain is Pyridoxal 5'-phosphate synthase subunit PdxT from Halalkalibacterium halodurans (strain ATCC BAA-125 / DSM 18197 / FERM 7344 / JCM 9153 / C-125) (Bacillus halodurans).